We begin with the raw amino-acid sequence, 360 residues long: (+)-6a-hydroxymaackiain 3-O-methyltransferase 1 (360 aa).

S-adenosyl-L-methionine-binding positions include 202-205 (VAGG), D226, 226-227 (DQ), 246-247 (DM), and K260. The Proton acceptor role is filled by H264.

It belongs to the class I-like SAM-binding methyltransferase superfamily. Cation-independent O-methyltransferase family. COMT subfamily.

The enzyme catalyses (+)-6a-hydroxymaackiain + S-adenosyl-L-methionine = (+)-pisatin + S-adenosyl-L-homocysteine + H(+). The catalysed reaction is a 4'-hydroxyisoflavone + S-adenosyl-L-methionine = a 4'-methoxyisoflavone + S-adenosyl-L-homocysteine + H(+). Its function is as follows. Methyltransferase involved in the phytoalexin pisatin biosynthesis. Has both 3- and 4'-O-methyltransferase activities. Can use (+)-6a-hydroxymaackiain, 2,7,4'-trihydroxyisoflavanone and with much less activity (+)-medicarpin as substrates, but not (-)-6a-hydroxymaackiain, daidzein, formononetin or isoliquiritigenin. May be involved in formononetin biosynthesis. In Pisum sativum (Garden pea), this protein is (+)-6a-hydroxymaackiain 3-O-methyltransferase 1 (HMM1).